The primary structure comprises 28 residues: Dermaseptin-6TR (28 aa).

Expressed by the skin glands.

The protein resides in the secreted. Functionally, has antimicrobial activity. This Phyllomedusa trinitatis (Trinidad leaf frog) protein is Dermaseptin-6TR.